Reading from the N-terminus, the 340-residue chain is Phosphate acyltransferase (340 aa).

Belongs to the PlsX family. As to quaternary structure, homodimer. Probably interacts with PlsY.

It localises to the cytoplasm. It catalyses the reaction a fatty acyl-[ACP] + phosphate = an acyl phosphate + holo-[ACP]. It participates in lipid metabolism; phospholipid metabolism. Functionally, catalyzes the reversible formation of acyl-phosphate (acyl-PO(4)) from acyl-[acyl-carrier-protein] (acyl-ACP). This enzyme utilizes acyl-ACP as fatty acyl donor, but not acyl-CoA. This chain is Phosphate acyltransferase, found in Nitrosococcus oceani (strain ATCC 19707 / BCRC 17464 / JCM 30415 / NCIMB 11848 / C-107).